The sequence spans 394 residues: MLKQIQKFLKLEAASGILLLVSALLAMIFANTDLNQLYFSFLQTEVAIKFGAFSIDKPLLMWVNDGFMAVFFILVGMEVKRELFEGSLSSYQKAIFPAVAALGGMIIPALVYWFINQNSPEYQQGWAIPMATDIAFALGIVALLSKQVPPALKVFLLALAIIDDLGAIIVIALFFSHEMSMQALTIASIAIVILVAMNRYKVTGLINYAIIGTILWASVLKSGVHATLAGVIIGFCIPLRGKNGEAPLHHLEHALAPWCSFAILPLFAFSNAGVSLEGMSLDKLASPLPLGVALGLIIGKPVGVFLFSYVAVLLGIAKVPEGINLKQIFAIAVLCGIGFTMSMFIAGLAFGEEDASESVLALARLGILMGTFVAAIIGYFLLKITTKPSLMKAA.

A run of 11 helical transmembrane segments spans residues 11–31 (LEAASGILLLVSALLAMIFAN), 59–79 (LLMWVNDGFMAVFFILVGMEV), 95–115 (IFPAVAALGGMIIPALVYWFI), 125–145 (GWAIPMATDIAFALGIVALLS), 155–175 (FLLALAIIDDLGAIIVIALFF), 177–197 (HEMSMQALTIASIAIVILVAM), 203–220 (TGLINYAIIGTILWASVL), 254–274 (ALAPWCSFAILPLFAFSNAGV), 296–316 (LIIGKPVGVFLFSYVAVLLGI), 328–348 (IFAIAVLCGIGFTMSMFIAGL), and 365–385 (LGILMGTFVAAIIGYFLLKIT).

It belongs to the NhaA Na(+)/H(+) (TC 2.A.33) antiporter family.

It localises to the cell inner membrane. It carries out the reaction Na(+)(in) + 2 H(+)(out) = Na(+)(out) + 2 H(+)(in). Functionally, na(+)/H(+) antiporter that extrudes sodium in exchange for external protons. The polypeptide is Na(+)/H(+) antiporter NhaA (Actinobacillus pleuropneumoniae serotype 3 (strain JL03)).